The chain runs to 343 residues: GTPase Obg (343 aa).

Positions 2 to 160 (EKFVDRVKIF…RWIILELKLI (159 aa)) constitute an Obg domain. The 172-residue stretch at 161 to 332 (ADVGLVGFPN…LKEGLWKKYE (172 aa)) folds into the OBG-type G domain. GTP is bound by residues 167–174 (GFPNAGKS), 192–196 (FTTLS), 214–217 (DIPG), 284–287 (NKID), and 313–315 (SAL). Positions 174 and 194 each coordinate Mg(2+).

Belongs to the TRAFAC class OBG-HflX-like GTPase superfamily. OBG GTPase family. As to quaternary structure, monomer. Mg(2+) serves as cofactor.

It is found in the cytoplasm. Its function is as follows. An essential GTPase which binds GTP, GDP and possibly (p)ppGpp with moderate affinity, with high nucleotide exchange rates and a fairly low GTP hydrolysis rate. Plays a role in control of the cell cycle, stress response, ribosome biogenesis and in those bacteria that undergo differentiation, in morphogenesis control. The protein is GTPase Obg of Aquifex aeolicus (strain VF5).